A 338-amino-acid chain; its full sequence is Glycerol-3-phosphate dehydrogenase [NAD(P)+] (338 aa).

Residues Ser-12, Trp-13, and Lys-110 each contribute to the NADPH site. Sn-glycerol 3-phosphate is bound by residues Lys-110, Gly-141, and Ser-143. Ala-145 serves as a coordination point for NADPH. Residues Lys-196, Asp-249, Ser-259, Arg-260, and Asn-261 each coordinate sn-glycerol 3-phosphate. The active-site Proton acceptor is the Lys-196. Arg-260 is an NADPH binding site. Positions 284 and 286 each coordinate NADPH.

It belongs to the NAD-dependent glycerol-3-phosphate dehydrogenase family.

Its subcellular location is the cytoplasm. It catalyses the reaction sn-glycerol 3-phosphate + NAD(+) = dihydroxyacetone phosphate + NADH + H(+). The catalysed reaction is sn-glycerol 3-phosphate + NADP(+) = dihydroxyacetone phosphate + NADPH + H(+). It participates in membrane lipid metabolism; glycerophospholipid metabolism. Catalyzes the reduction of the glycolytic intermediate dihydroxyacetone phosphate (DHAP) to sn-glycerol 3-phosphate (G3P), the key precursor for phospholipid synthesis. The protein is Glycerol-3-phosphate dehydrogenase [NAD(P)+] of Lactiplantibacillus plantarum (strain ATCC BAA-793 / NCIMB 8826 / WCFS1) (Lactobacillus plantarum).